A 365-amino-acid polypeptide reads, in one-letter code: Probable caffeine synthase 2 (365 aa).

Tyr19 contacts S-adenosyl-L-homocysteine. Thr26 is a binding site for caffeine. 5 residues coordinate S-adenosyl-L-homocysteine: Cys62, Asp99, Leu100, Ser134, and Phe135. 3 residues coordinate caffeine: Tyr152, His155, and Trp156. Mg(2+) is bound at residue Asn173. Arg221 serves as a coordination point for caffeine. The Mg(2+) site is built by Asp259, Phe261, and Asn262. Phe317 is a binding site for caffeine.

Belongs to the methyltransferase superfamily. Type-7 methyltransferase family. Mg(2+) serves as cofactor.

The enzyme catalyses 7-methylxanthine + S-adenosyl-L-methionine = theobromine + S-adenosyl-L-homocysteine + H(+). It catalyses the reaction theobromine + S-adenosyl-L-methionine = caffeine + S-adenosyl-L-homocysteine + H(+). It carries out the reaction 1,7-dimethylxanthine + S-adenosyl-L-methionine = caffeine + S-adenosyl-L-homocysteine + H(+). The protein operates within alkaloid biosynthesis. Functionally, may be involved in the biosynthesis of caffeine. Catalyzes the conversion of 7-methylxanthine (7mX) to theobromine and of theobromine to caffeine. Has 1-N-methylation activity. The protein is Probable caffeine synthase 2 of Camellia sinensis (Tea plant).